The following is a 213-amino-acid chain: Peptide methionine sulfoxide reductase MsrA (213 aa).

Residue Cys-53 is part of the active site.

This sequence belongs to the MsrA Met sulfoxide reductase family.

The enzyme catalyses L-methionyl-[protein] + [thioredoxin]-disulfide + H2O = L-methionyl-(S)-S-oxide-[protein] + [thioredoxin]-dithiol. It carries out the reaction [thioredoxin]-disulfide + L-methionine + H2O = L-methionine (S)-S-oxide + [thioredoxin]-dithiol. Its function is as follows. Has an important function as a repair enzyme for proteins that have been inactivated by oxidation. Catalyzes the reversible oxidation-reduction of methionine sulfoxide in proteins to methionine. The chain is Peptide methionine sulfoxide reductase MsrA from Serratia proteamaculans (strain 568).